Reading from the N-terminus, the 101-residue chain is NAD(P)H-quinone oxidoreductase subunit 4L, chloroplastic (101 aa).

Transmembrane regions (helical) follow at residues 2–22, 32–52, and 61–81; these read ILEHVLVLSAYLFLIGLYGLI, MCLELILNAVNMNFVTFSDFF, and IFCIFVIAIAAAEAAIGLAIV.

This sequence belongs to the complex I subunit 4L family. NDH is composed of at least 16 different subunits, 5 of which are encoded in the nucleus.

It localises to the plastid. The protein localises to the chloroplast thylakoid membrane. It carries out the reaction a plastoquinone + NADH + (n+1) H(+)(in) = a plastoquinol + NAD(+) + n H(+)(out). It catalyses the reaction a plastoquinone + NADPH + (n+1) H(+)(in) = a plastoquinol + NADP(+) + n H(+)(out). Functionally, NDH shuttles electrons from NAD(P)H:plastoquinone, via FMN and iron-sulfur (Fe-S) centers, to quinones in the photosynthetic chain and possibly in a chloroplast respiratory chain. The immediate electron acceptor for the enzyme in this species is believed to be plastoquinone. Couples the redox reaction to proton translocation, and thus conserves the redox energy in a proton gradient. The protein is NAD(P)H-quinone oxidoreductase subunit 4L, chloroplastic of Arabidopsis thaliana (Mouse-ear cress).